Here is a 107-residue protein sequence, read N- to C-terminus: Phosphoribosyl-ATP pyrophosphatase (107 aa).

This sequence belongs to the PRA-PH family.

It localises to the cytoplasm. It carries out the reaction 1-(5-phospho-beta-D-ribosyl)-ATP + H2O = 1-(5-phospho-beta-D-ribosyl)-5'-AMP + diphosphate + H(+). It participates in amino-acid biosynthesis; L-histidine biosynthesis; L-histidine from 5-phospho-alpha-D-ribose 1-diphosphate: step 2/9. The polypeptide is Phosphoribosyl-ATP pyrophosphatase (Nitrobacter hamburgensis (strain DSM 10229 / NCIMB 13809 / X14)).